The following is a 587-amino-acid chain: Dynein axonemal intermediate chain 2 (587 aa).

WD repeat units follow at residues 214 to 254 (RPAS…NPVE), 261 to 302 (SHRD…EPTE), 362 to 401 (GHHG…SSIM), and 405 to 445 (YHTS…NNPS). Disordered regions lie at residues 519 to 542 (LKER…DMKE) and 562 to 587 (KEQQ…IVHE).

This sequence belongs to the dynein intermediate chain family. Consists of at least two heavy chains and a number of intermediate and light chains. Interacts with DNAAF2. Interacts with DNAAF6/PIH1D3. Interacts with HEATR2; probably involved in outer arm dynein assembly. Interacts with C16ORF71/DAAP1.

Its subcellular location is the cytoplasm. The protein localises to the cytoskeleton. The protein resides in the cilium axoneme. It localises to the dynein axonemal particle. Its function is as follows. Part of the dynein complex of multiciliated cell cilia. The polypeptide is Dynein axonemal intermediate chain 2 (dnai2) (Xenopus laevis (African clawed frog)).